The sequence spans 393 residues: DNA-directed RNA polymerase subunit Rpo1C (393 aa).

It belongs to the RNA polymerase beta' chain family. In terms of assembly, part of the RNA polymerase complex.

Its subcellular location is the cytoplasm. The enzyme catalyses RNA(n) + a ribonucleoside 5'-triphosphate = RNA(n+1) + diphosphate. In terms of biological role, DNA-dependent RNA polymerase (RNAP) catalyzes the transcription of DNA into RNA using the four ribonucleoside triphosphates as substrates. Forms part of the jaw domain. The chain is DNA-directed RNA polymerase subunit Rpo1C from Thermococcus celer.